The primary structure comprises 216 residues: Probable chemoreceptor glutamine deamidase CheD (216 aa).

This sequence belongs to the CheD family.

The enzyme catalyses L-glutaminyl-[protein] + H2O = L-glutamyl-[protein] + NH4(+). Its function is as follows. Probably deamidates glutamine residues to glutamate on methyl-accepting chemotaxis receptors (MCPs), playing an important role in chemotaxis. The polypeptide is Probable chemoreceptor glutamine deamidase CheD (Halorhodospira halophila (strain DSM 244 / SL1) (Ectothiorhodospira halophila (strain DSM 244 / SL1))).